Consider the following 62-residue polypeptide: Potassium channel toxin alpha-KTx 10.1 (62 aa).

An N-terminal signal peptide occupies residues 1–22; sequence MEGIAKITLILLFLFVTMHTFA. Positions 23 to 28 are excised as a propeptide; that stretch reads NWNTEA. 3 disulfides stabilise this stretch: cysteine 31–cysteine 50, cysteine 36–cysteine 55, and cysteine 40–cysteine 57. Tyrosine amide is present on tyrosine 60.

This sequence belongs to the short scorpion toxin superfamily. Potassium channel inhibitor family. Alpha-KTx 10 subfamily. In terms of tissue distribution, expressed by the venom gland.

It is found in the secreted. Its function is as follows. Blocks Shaker B (Sh) and voltage-gated potassium-channels Kv1.1/KCNA1, Kv1.2/KCNA2, Kv1.3/KCNA3. Also inhibits small conductance calcium-activated potassium channels (KCNN) and intermediate conductance calcium-activated potassium channel (KCa3.1/KCNN4). The polypeptide is Potassium channel toxin alpha-KTx 10.1 (Centruroides noxius (Mexican scorpion)).